The following is a 138-amino-acid chain: Small ribosomal subunit protein uS9c (138 aa).

This sequence belongs to the universal ribosomal protein uS9 family.

It is found in the plastid. Its subcellular location is the chloroplast. The sequence is that of Small ribosomal subunit protein uS9c (rps9) from Trieres chinensis (Marine centric diatom).